Consider the following 91-residue polypeptide: Small ribosomal subunit protein bS20 (91 aa).

Belongs to the bacterial ribosomal protein bS20 family.

Binds directly to 16S ribosomal RNA. The chain is Small ribosomal subunit protein bS20 from Acidithiobacillus ferrooxidans (strain ATCC 23270 / DSM 14882 / CIP 104768 / NCIMB 8455) (Ferrobacillus ferrooxidans (strain ATCC 23270)).